Here is a 410-residue protein sequence, read N- to C-terminus: Serine hydroxymethyltransferase (410 aa).

Residues leucine 116 and 120 to 122 (GHL) contribute to the (6S)-5,6,7,8-tetrahydrofolate site. Lysine 225 carries the post-translational modification N6-(pyridoxal phosphate)lysine. Position 349 to 351 (349 to 351 (SPF)) interacts with (6S)-5,6,7,8-tetrahydrofolate.

It belongs to the SHMT family. As to quaternary structure, homodimer. Pyridoxal 5'-phosphate serves as cofactor.

It is found in the cytoplasm. The enzyme catalyses (6R)-5,10-methylene-5,6,7,8-tetrahydrofolate + glycine + H2O = (6S)-5,6,7,8-tetrahydrofolate + L-serine. The protein operates within one-carbon metabolism; tetrahydrofolate interconversion. It participates in amino-acid biosynthesis; glycine biosynthesis; glycine from L-serine: step 1/1. Catalyzes the reversible interconversion of serine and glycine with tetrahydrofolate (THF) serving as the one-carbon carrier. This reaction serves as the major source of one-carbon groups required for the biosynthesis of purines, thymidylate, methionine, and other important biomolecules. Also exhibits THF-independent aldolase activity toward beta-hydroxyamino acids, producing glycine and aldehydes, via a retro-aldol mechanism. In Leuconostoc mesenteroides subsp. mesenteroides (strain ATCC 8293 / DSM 20343 / BCRC 11652 / CCM 1803 / JCM 6124 / NCDO 523 / NBRC 100496 / NCIMB 8023 / NCTC 12954 / NRRL B-1118 / 37Y), this protein is Serine hydroxymethyltransferase.